We begin with the raw amino-acid sequence, 2475 residues long: Polyprotein pp220 (2475 aa).

Gly2 is lipidated: N-myristoyl glycine; by host. Residues 2185–2212 (KNQLIADLTTIREQLVSMRREVENMIQT) adopt a coiled-coil conformation.

This sequence belongs to the asfivirus polyprotein pp220 family. In terms of processing, the polyprotein is not glycosylated. Specific enzymatic cleavages in vivo by the viral pS273R protease yield mature proteins.

It localises to the host cytoplasm. The protein localises to the host perinuclear region. It is found in the virion. Its subcellular location is the host nucleus. Functionally, essential for the core assembly. Its myristoyl moiety may function as a membrane-anchoring signal to bind the developing core shell to the inner viral envelope. Its function is as follows. The structural protein p34 is a component of the virus core shell. In terms of biological role, the structural protein p14 is a component of the virus core shell. The structural protein p37 is a component of the virus core shell. Functionally, the structural protein p150 is a component of the virus core shell. The chain is Polyprotein pp220 from Ornithodoros (relapsing fever ticks).